A 153-amino-acid polypeptide reads, in one-letter code: Small ribosomal subunit protein eS19 (153 aa).

Belongs to the eukaryotic ribosomal protein eS19 family. In terms of assembly, part of the 30S ribosomal subunit.

In terms of biological role, may be involved in maturation of the 30S ribosomal subunit. This Aeropyrum pernix (strain ATCC 700893 / DSM 11879 / JCM 9820 / NBRC 100138 / K1) protein is Small ribosomal subunit protein eS19.